A 370-amino-acid polypeptide reads, in one-letter code: E3 ubiquitin-protein ligase E3D (370 aa).

Ala2 is subject to N-acetylalanine. The short motif at 129–159 (PLPSENWSALVGEWCCHPDPFANKPLHPREN) is the BRAT1-like motif element. Cys144 is a Zn(2+) binding site. The tract at residues 214 to 236 (QPSEGSFPNIPRSQFVQSVIARC) is interaction with UBE2C. An HECT-like region spans residues 332-368 (LPSTTCLELLLILSRNNASLPLSLRQMNSFQLWCSHC).

In terms of assembly, interacts with UBE2C/UbcH10 (E2 ubiquitin-conjugating enzyme). In vitro, interacts with cyclin-B. Ubiquitinated by UBCH10 (E2 ubiquitin-conjugating enzyme).

The protein resides in the cytoplasm. It carries out the reaction S-ubiquitinyl-[E2 ubiquitin-conjugating enzyme]-L-cysteine + [acceptor protein]-L-lysine = [E2 ubiquitin-conjugating enzyme]-L-cysteine + N(6)-ubiquitinyl-[acceptor protein]-L-lysine.. Its pathway is protein modification; protein ubiquitination. In terms of biological role, E3 ubiquitin-protein ligase which accepts ubiquitin from specific E2 ubiquitin-conjugating enzymes, and transfers it to substrates, generally promoting their degradation by the proteasome. Independently of its E3 ubiquitin-protein ligase activity, acts as an inhibitor of CPSF3 endonuclease activity by blocking CPSF3 active site. The polypeptide is E3 ubiquitin-protein ligase E3D (Ube3d) (Rattus norvegicus (Rat)).